Consider the following 90-residue polypeptide: Non-structural protein NS-S (90 aa).

The protein belongs to the hantavirus NS-S protein family.

It is found in the host cytoplasm. The protein resides in the host perinuclear region. In terms of biological role, antagonizes host type-I IFN signaling pathway. This Homo sapiens (Human) protein is Non-structural protein NS-S (N).